Reading from the N-terminus, the 240-residue chain is LexA repressor (240 aa).

A DNA-binding region (H-T-H motif) is located at residues 26–46 (FDEMKDALDLASKSGIHRLIT). Residues 78 to 113 (QPRRGFSPSVIEGSLGKPQPVQPPAPAKPANDENNS) form a disordered region. Residues serine 160 and lysine 198 each act as for autocatalytic cleavage activity in the active site.

This sequence belongs to the peptidase S24 family. As to quaternary structure, homodimer.

It catalyses the reaction Hydrolysis of Ala-|-Gly bond in repressor LexA.. Its function is as follows. Represses a number of genes involved in the response to DNA damage (SOS response), including recA and lexA. In the presence of single-stranded DNA, RecA interacts with LexA causing an autocatalytic cleavage which disrupts the DNA-binding part of LexA, leading to derepression of the SOS regulon and eventually DNA repair. The chain is LexA repressor from Rhizobium rhizogenes (strain K84 / ATCC BAA-868) (Agrobacterium radiobacter).